Reading from the N-terminus, the 583-residue chain is Chromosomal replication initiator protein DnaA (583 aa).

Residues 1–91 (MSNSNFSIEE…KHVLKTRLDL (91 aa)) are domain I, interacts with DnaA modulators. Residues 91 to 241 (LSVSLAITST…SFNDGLDGES (151 aa)) form a domain II region. The disordered stretch occupies residues 151–239 (KAEQRDGASQ…SSSFNDGLDG (89 aa)). Over residues 172–182 (EAARRREHDAD) the composition is skewed to basic and acidic residues. The tract at residues 242–458 (LLNKNYTFEN…GALIRVTAYC (217 aa)) is domain III, AAA+ region. ATP is bound by residues glycine 286, glycine 288, lysine 289, and threonine 290. Residues 459-583 (ALSHEPLTVE…TQKIKSHARD (125 aa)) are domain IV, binds dsDNA.

This sequence belongs to the DnaA family. In terms of assembly, oligomerizes as a right-handed, spiral filament on DNA at oriC.

The protein resides in the cytoplasm. In terms of biological role, plays an essential role in the initiation and regulation of chromosomal replication. ATP-DnaA binds to the origin of replication (oriC) to initiate formation of the DNA replication initiation complex once per cell cycle. Binds the DnaA box (a 9 base pair repeat at the origin) and separates the double-stranded (ds)DNA. Forms a right-handed helical filament on oriC DNA; dsDNA binds to the exterior of the filament while single-stranded (ss)DNA is stabiized in the filament's interior. The ATP-DnaA-oriC complex binds and stabilizes one strand of the AT-rich DNA unwinding element (DUE), permitting loading of DNA polymerase. After initiation quickly degrades to an ADP-DnaA complex that is not apt for DNA replication. Binds acidic phospholipids. The protein is Chromosomal replication initiator protein DnaA of Corynebacterium jeikeium (strain K411).